Consider the following 141-residue polypeptide: Subtilase cytotoxin subunit B (141 aa).

An N-terminal signal peptide occupies residues 1-23 (MTIKRFFVCAGIMGCLSLNPAMA). N-glycoloyl-alpha-neuraminate contacts are provided by residues 33–35 (MFS) and Q59. The hydrophobic patch important for binding to SubA stretch occupies residues 89-94 (YFYTTG). Residue Y101 coordinates N-glycoloyl-alpha-neuraminate.

As to quaternary structure, forms a complex with SubA with the stoichiometry SubA1:SubB5 (called SubAB5). Each SubB subunit makes different contacts with the single SubA subunit. This subunit alone forms pentamers.

The protein localises to the secreted. The protein resides in the host cytoplasm. It is found in the host cytosol. Its subcellular location is the host endoplasmic reticulum lumen. In terms of biological role, receptor-binding subunit of subtilase cytotoxin SubAB5. Required for receptor-binding and thus correct trafficking in the host cell. Has specificity for host glycans terminating in the sialic acid N-glycolyl-alpha-neuraminic acid (Neu5Gc); each subunit in the SubB pentamer binds one Neu5Gc. The protease subunit (SubA) cleaves host BiP/HSPA5, inducing the host endoplasmic reticulum stress response and eventual cell death. Culture supernatant of E.coli expressing both subA and subB are toxic for Vero cells (African green monkey kidney cell line), Chinese hamster ovary cells and Hct-8 cells (human colonic epithelial cell line); the subunits are not toxic individually. Purified SubAB5 is highly toxic, &lt;0.1 pg is able to kill at least 50% of 30'000 Vero cells in a microtiter plate assay after 3 days; no cytotoxicity is seen at 24 hours. Preabsorption with cells expressing a ganglioside GM2 mimic reduced cytotoxicity of SubAB5 by 93% in the Vero cytotoxicity assay. Intraperitoneal injection of 200 ng of purified SubAB5 kills mice; the higher the dose the faster the mice die. Animals injected with purified SubAB5 have microvascular thrombi in the brain and other organs, including the renal tubules and glomeruli. Mice fed E.coli cells expressing cloned SubAB5 experience drastic weight loss and appear ill and lethargic. SubB alone at 2.5 ug/ml causes vacuolation of Vero cells, which requires the V-type ATPase proton pump; treated cells die. Protein synthesis in Vero cells is transiently inhibited by SubAB5; both subunits are required for this effect. Inhibition of protein synthesis is prevented by brefeldin A; cells are arrested in the G1 phase. SubAB5 at 100 ng/ml induced caspase-dependent apoptosis in Vero cells through mitochondrial membrane damage. The polypeptide is Subtilase cytotoxin subunit B (Escherichia coli).